Here is a 418-residue protein sequence, read N- to C-terminus: E3 ubiquitin-protein ligase makorin-2 (418 aa).

C3H1-type zinc fingers lie at residues 2–29 (NTKH…HDLA) and 31–58 (SKPS…HVKP). The tract at residues 76–100 (ESTPPLLPTQEAAAPVTKSAPQRRE) is disordered. A C3H1-type 3 zinc finger spans residues 164–191 (DAPQQLCPFAQAGGCHYGESCPYIHGNV). The interval 192 to 221 (CEICGLQVLHPYDQEQRGHHEKLCMANFER) is makorin-type Cys-His. The segment at 237–291 (CSICMERVYDKQSPSERRFGILSNCHHTYCLACIRQWRCARQFENPVIKSCPECR) adopts an RING-type zinc-finger fold. The C3H1-type 4 zinc-finger motif lies at 320–349 (GMGKKACKYFDQGRGTCPFGGKCLYLHAYP).

The protein localises to the cytoplasm. It is found in the nucleus. It catalyses the reaction S-ubiquitinyl-[E2 ubiquitin-conjugating enzyme]-L-cysteine + [acceptor protein]-L-lysine = [E2 ubiquitin-conjugating enzyme]-L-cysteine + N(6)-ubiquitinyl-[acceptor protein]-L-lysine.. It functions in the pathway protein modification; protein ubiquitination. In terms of biological role, E3 ubiquitin ligase catalyzing the covalent attachment of ubiquitin moieties onto substrate proteins. Inhibits neurogenesis and axis formation during embryonic development by modulating the phosphatidylinositol 3-kinase (PI3K) pathway. Acts downstream of PI3K and akt1 to up-regulate gsk3b mRNA expression. The chain is E3 ubiquitin-protein ligase makorin-2 (mkrn2) from Xenopus tropicalis (Western clawed frog).